The primary structure comprises 104 residues: Protein P3 (104 aa).

The chain crosses the membrane as a helical span at residues 77–99 (LVFGVPQKTLLLGFGGLLVLGLV).

In terms of assembly, homodimer.

It is found in the virion membrane. The chain is Protein P3 (III) from Pseudoalteromonas phage PM2 (Bacteriophage PM2).